Consider the following 268-residue polypeptide: MSAGKVSIRDFLKKKGKEKITMLTAYDYPTAKIMSMTNLDGILVGDSLSMVVLGYENTLKVSMKEMLVHLDSVVRAKPRQLVVADMPFLSYEVSANTAVKNAGLFVRHGADSVKLEGGEEMADVVRKIVRAGIPVMGHIGLTPQRFLRIGGFRVLGKSKHEEEQLLRDAEVLEEAGIFSLVIENTYADVAKKITEKLKVPTICIGAGPYCDGQILVIHDVLGLSEFTPYFAKAYVNLKEEIQKAVNKYVEEVRESKFPQGENYKERES.

Residues Asp46 and Asp85 each contribute to the Mg(2+) site. 3-methyl-2-oxobutanoate contacts are provided by residues Asp46–Ser47, Asp85, and Lys114. Position 116 (Glu116) interacts with Mg(2+). Glu183 functions as the Proton acceptor in the catalytic mechanism.

Belongs to the PanB family. Homodecamer; pentamer of dimers. The cofactor is Mg(2+).

The protein localises to the cytoplasm. It carries out the reaction 3-methyl-2-oxobutanoate + (6R)-5,10-methylene-5,6,7,8-tetrahydrofolate + H2O = 2-dehydropantoate + (6S)-5,6,7,8-tetrahydrofolate. Its pathway is cofactor biosynthesis; coenzyme A biosynthesis. Functionally, catalyzes the reversible reaction in which hydroxymethyl group from 5,10-methylenetetrahydrofolate is transferred onto alpha-ketoisovalerate to form ketopantoate. This Sulfolobus acidocaldarius (strain ATCC 33909 / DSM 639 / JCM 8929 / NBRC 15157 / NCIMB 11770) protein is 3-methyl-2-oxobutanoate hydroxymethyltransferase.